The chain runs to 240 residues: Small ribosomal subunit protein uS3m (240 aa).

The protein belongs to the universal ribosomal protein uS3 family.

It is found in the mitochondrion. This Chondrus crispus (Carrageen Irish moss) protein is Small ribosomal subunit protein uS3m (RPS3).